The sequence spans 415 residues: 26S proteasome regulatory subunit 6B (415 aa).

203–210 (GPPGCGKT) serves as a coordination point for ATP.

Belongs to the AAA ATPase family.

The protein localises to the cytoplasm. It localises to the nucleus. The 26S proteasome is involved in the ATP-dependent degradation of ubiquitinated proteins. The regulatory (or ATPase) complex confers ATP dependency and substrate specificity to the 26S complex. The chain is 26S proteasome regulatory subunit 6B from Manduca sexta (Tobacco hawkmoth).